A 438-amino-acid chain; its full sequence is Glutamate-1-semialdehyde 2,1-aminomutase (438 aa).

At K274 the chain carries N6-(pyridoxal phosphate)lysine.

It belongs to the class-III pyridoxal-phosphate-dependent aminotransferase family. HemL subfamily. In terms of assembly, homodimer. It depends on pyridoxal 5'-phosphate as a cofactor.

It is found in the cytoplasm. It catalyses the reaction (S)-4-amino-5-oxopentanoate = 5-aminolevulinate. It participates in porphyrin-containing compound metabolism; protoporphyrin-IX biosynthesis; 5-aminolevulinate from L-glutamyl-tRNA(Glu): step 2/2. The chain is Glutamate-1-semialdehyde 2,1-aminomutase from Salinibacter ruber (strain DSM 13855 / M31).